Reading from the N-terminus, the 227-residue chain is Orotidine 5'-phosphate decarboxylase (227 aa).

Substrate contacts are provided by residues D12, K34, 61 to 70 (DLKLHDIPNT), T117, R178, Q187, G207, and R208. K63 serves as the catalytic Proton donor.

Belongs to the OMP decarboxylase family. Type 1 subfamily. In terms of assembly, homodimer.

The catalysed reaction is orotidine 5'-phosphate + H(+) = UMP + CO2. It functions in the pathway pyrimidine metabolism; UMP biosynthesis via de novo pathway; UMP from orotate: step 2/2. Functionally, catalyzes the decarboxylation of orotidine 5'-monophosphate (OMP) to uridine 5'-monophosphate (UMP). This is Orotidine 5'-phosphate decarboxylase from Anaeromyxobacter dehalogenans (strain 2CP-1 / ATCC BAA-258).